We begin with the raw amino-acid sequence, 549 residues long: Beta-hexosaminidase Amuc_0868 (549 aa).

Positions 1 to 28 are cleaved as a signal peptide; the sequence is MISKCTFSATVFSLFSLCWGAPSSPVLE. Arg-161 is a binding site for substrate. Active-site charge relay system residues include Asp-190 and His-260. Substrate is bound at residue Asp-326. Glu-327 serves as the catalytic Charge relay system. Substrate-binding positions include Trp-393, 420–422, and 474–476; these read YFD and WTE. Residues 526–549 are disordered; the sequence is GVNYKRPDNGAPAQPKAVITRERR.

Belongs to the glycosyl hydrolase 20 family.

The enzyme catalyses Hydrolysis of terminal non-reducing N-acetyl-D-hexosamine residues in N-acetyl-beta-D-hexosaminides.. Inhibited strongly by Cu(2+), Zn(2+), Cd(2+) and Ni(2+) ions. No effect on activity with Na(+), Li(+), K(+), Ca(2+), Mg(2+) or Mn(2+) ions. Potentially capable of cleaving the specific glycoside linkages in the process of mucin degradation in human intestinal tract. Hydrolyzes chromogenic substrates pNP-beta-GlcNAc with high activity and pNP-beta-GalNAc to a lesser extent, but not pNP-beta-glucose or pNP-beta-galactose. This chain is Beta-hexosaminidase Amuc_0868, found in Akkermansia muciniphila (strain ATCC BAA-835 / DSM 22959 / JCM 33894 / BCRC 81048 / CCUG 64013 / CIP 107961 / Muc).